Reading from the N-terminus, the 134-residue chain is Ribosome-binding factor A (134 aa).

The protein belongs to the RbfA family. Monomer. Binds 30S ribosomal subunits, but not 50S ribosomal subunits or 70S ribosomes.

It is found in the cytoplasm. Functionally, one of several proteins that assist in the late maturation steps of the functional core of the 30S ribosomal subunit. Associates with free 30S ribosomal subunits (but not with 30S subunits that are part of 70S ribosomes or polysomes). Required for efficient processing of 16S rRNA. May interact with the 5'-terminal helix region of 16S rRNA. This Baumannia cicadellinicola subsp. Homalodisca coagulata protein is Ribosome-binding factor A.